Here is a 955-residue protein sequence, read N- to C-terminus: Sex determination protein fruitless (955 aa).

Disordered regions lie at residues 1–55 (MMAT…HAHS) and 70–89 (IETDVRAPPPPLPPPPLPLP). Basic residues predominate over residues 35 to 55 (PHGHGHLHSHAHAHGHGHAHS). The segment covering 76-89 (APPPPLPPPPLPLP) has biased composition (pro residues). The 66-residue stretch at 131–196 (CDVTLACEGE…MYKGEVNVGQ (66 aa)) folds into the BTB domain. 3 disordered regions span residues 229-288 (LRDS…SMSE), 352-526 (NRSA…LGGG), and 784-814 (ANHQLHQHPPSATHPSHSQSSPHYPSASGAG). A compositionally biased stretch (polar residues) spans 233 to 246 (AASSPTGRGPSNYT). Composition is skewed to basic and acidic residues over residues 258-279 (AMRESRDSLRSRCERDLRDELT) and 360-379 (CSDRGSERGTLERTDSRDDL). Residues 387–420 (KDNNNSNSSSTGGNNNNNNNNNNNSSSNNNNSSS) are compositionally biased toward low complexity. The segment covering 421-446 (NRERNNSGERERERERERERDRDREL) has biased composition (basic and acidic residues). Low complexity-rich tracts occupy residues 464 to 475 (SSSNCDNSLSSS) and 790 to 814 (QHPPSATHPSHSQSSPHYPSASGAG). The C2H2-type zinc-finger motif lies at 918-941 (HECPVCGQKFTRRDNMKAHCKIKH).

Expressed in parts of the adult male brain associated with the courtship song and steps of the male courtship. Also expressed in the larval and pupal male mushroom body and optic lobe. Expressed in pupal female optic lobe.

The protein localises to the nucleus. In terms of biological role, probably acts as a transcriptional regulator. Part of the somatic sex determination hierarchy; sex determination genes transformer (tra) and transformer-2 (tra-2) switch fru splicing from the male-specific pattern to the female-specific pattern through activation of the female-specific fru 5'-splice site. Vital for the development of males and females. Controls the development of the male specific abdominal muscle of Lawrence. Plays a role in male courtship behavior and sexual orientation. Enhances male-specific expression of takeout in brain-associated fat body. This is Sex determination protein fruitless (fru) from Drosophila melanogaster (Fruit fly).